We begin with the raw amino-acid sequence, 130 residues long: Ribonuclease P protein component (130 aa).

It belongs to the RnpA family. Consists of a catalytic RNA component (M1 or rnpB) and a protein subunit.

The catalysed reaction is Endonucleolytic cleavage of RNA, removing 5'-extranucleotides from tRNA precursor.. Functionally, RNaseP catalyzes the removal of the 5'-leader sequence from pre-tRNA to produce the mature 5'-terminus. It can also cleave other RNA substrates such as 4.5S RNA. The protein component plays an auxiliary but essential role in vivo by binding to the 5'-leader sequence and broadening the substrate specificity of the ribozyme. This is Ribonuclease P protein component from Desulfovibrio desulfuricans (strain ATCC 27774 / DSM 6949 / MB).